The primary structure comprises 77 residues: Small ribosomal subunit protein bS20 (77 aa).

Belongs to the bacterial ribosomal protein bS20 family.

Functionally, binds directly to 16S ribosomal RNA. The sequence is that of Small ribosomal subunit protein bS20 from Streptococcus uberis (strain ATCC BAA-854 / 0140J).